Consider the following 299-residue polypeptide: Probable alpha-L-glutamate ligase (299 aa).

Positions 112 to 294 (LQLLTEQGIA…IALQMIVHIE (183 aa)) constitute an ATP-grasp domain. ATP contacts are provided by residues Lys-148, 185 to 186 (DF), Asp-194, and 218 to 220 (RAN). The Mg(2+) site is built by Asp-255, Glu-267, and Asn-269. Mn(2+)-binding residues include Asp-255, Glu-267, and Asn-269.

It belongs to the RimK family. It depends on Mg(2+) as a cofactor. Mn(2+) is required as a cofactor.

The sequence is that of Probable alpha-L-glutamate ligase from Histophilus somni (strain 129Pt) (Haemophilus somnus).